Reading from the N-terminus, the 189-residue chain is ATP-dependent protease subunit HslV (189 aa).

Thr12 is an active-site residue. Residues Ser172, Cys175, and Thr178 each contribute to the Na(+) site.

It belongs to the peptidase T1B family. HslV subfamily. As to quaternary structure, a double ring-shaped homohexamer of HslV is capped on each side by a ring-shaped HslU homohexamer. The assembly of the HslU/HslV complex is dependent on binding of ATP.

The protein resides in the cytoplasm. It carries out the reaction ATP-dependent cleavage of peptide bonds with broad specificity.. With respect to regulation, allosterically activated by HslU binding. Protease subunit of a proteasome-like degradation complex believed to be a general protein degrading machinery. The protein is ATP-dependent protease subunit HslV of Ehrlichia canis (strain Jake).